Here is a 200-residue protein sequence, read N- to C-terminus: Rubrerythrin (200 aa).

One can recognise a Ferritin-like diiron domain in the interval 12 to 155 (SIKGSKTEKH…ALLAHVEDGS (144 aa)). Residues E29, E62, E103, E106, E137, H140, C167, C170, C183, and C186 each coordinate Fe(3+). The 39-residue stretch at 162–200 (EIAWQCRNCGYVITSKKAPKLCPACAHPQAYFEPMKTNY) folds into the Rubredoxin-like domain.

In terms of assembly, homodimer. Possesses two rubredoxin-like centers and two non-sulfur oxo-bridged di-iron centers per dimer. Fe(3+) serves as cofactor.

Its subcellular location is the cytoplasm. May provide oxidative stress protection via catalytic reduction of intracellular hydrogen peroxide. This Porphyromonas gingivalis (strain ATCC BAA-308 / W83) protein is Rubrerythrin (rbr).